Consider the following 227-residue polypeptide: MLIMKKLLLIAATSATMLSSSVSFAEGMDHEWYLRIDTGAAMFNEEKDKATGVKLKSNTTVPVALGIGYYISENFRADLTLGTIIGGKLKKSGAATNAPFTRTNISASHKPTITRLLINGYVDLTNFDMFDVFAGAGVGSALVKEKITYNGITGLSSNTKNRTNISYKLTLGTSAQIADGVKVELAYSWIDDGRTKSKNVIYQGTSVPTGGMHYQSHNLTAGIRFDI.

The signal sequence occupies residues 1-25 (MLIMKKLLLIAATSATMLSSSVSFA).

The protein to R.conorii RC1281.

This is an uncharacterized protein from Rickettsia conorii (strain ATCC VR-613 / Malish 7).